The primary structure comprises 1369 residues: DNA-directed RNA polymerase subunit beta' (1369 aa).

The disordered stretch occupies residues Met-1–Arg-43. Positions Lys-7–Lys-24 are enriched in basic residues. Residues Cys-253, Cys-320, Cys-327, and Cys-330 each contribute to the Zn(2+) site. Residues Thr-1294–Glu-1369 are disordered. A compositionally biased stretch (acidic residues) spans Asp-1342–Met-1351. Residues Leu-1357–Glu-1369 show a composition bias toward low complexity.

It belongs to the RNA polymerase beta' chain family. RpoC2 subfamily. As to quaternary structure, in cyanobacteria the RNAP catalytic core is composed of 2 alpha, 1 beta, 1 beta', 1 gamma and 1 omega subunit. When a sigma factor is associated with the core the holoenzyme is formed, which can initiate transcription. The cofactor is Zn(2+).

The catalysed reaction is RNA(n) + a ribonucleoside 5'-triphosphate = RNA(n+1) + diphosphate. DNA-dependent RNA polymerase catalyzes the transcription of DNA into RNA using the four ribonucleoside triphosphates as substrates. This is DNA-directed RNA polymerase subunit beta' from Prochlorococcus marinus (strain NATL1A).